A 1124-amino-acid chain; its full sequence is Sodium/hydrogen exchanger 11 (1124 aa).

11 helical membrane-spanning segments follow: residues 25–45, 52–72, 90–110, 120–140, 179–199, 224–244, 254–274, 305–325, 335–355, 372–392, and 405–425; these read LVEE…GGLL, CEVI…HMAY, FSLY…DVEF, VLLT…YVVI, IYID…SIFF, DILG…CILA, IILC…LGMS, IFSS…IGCG, IPFI…TILL, GVVI…APDV, and MFIL…SYVM. N-linked (GlcNAc...) asparagine glycosylation is found at asparagine 447 and asparagine 473. The next 4 membrane-spanning stretches (helical) occupy residues 612–632, 641–661, 674–694, and 706–726; these read TGQI…WPMA, ISIN…KIII, LEFF…FVKL, and VIMG…IVPI. The ion transport-like stretch occupies residues 642-723; sequence SINYYFMFLY…IRFLPLFKII (82 aa). An a nucleoside 3',5'-cyclic phosphate-binding site is contributed by 867-999; it reads IWLEGKDVLI…EYKIWLKLAL (133 aa).

It belongs to the monovalent cation:proton antiporter 1 (CPA1) transporter (TC 2.A.36) family.

The protein resides in the membrane. Its function is as follows. Involved in pH regulation. This Homo sapiens (Human) protein is Sodium/hydrogen exchanger 11 (SLC9C2).